The primary structure comprises 80 residues: Trefoil factor 3 (80 aa).

Residues 1–21 form the signal peptide; that stretch reads MEARMFWLLVVLLALASSSSA. The P-type domain occupies 30 to 73; the sequence is NQCAVPAKDRVDCGYPQVTPEQCNNRGCCFDSSIXGVPWCFKPL. Intrachain disulfides connect C32-C58, C42-C57, and C52-C69.

As to quaternary structure, monomer. Homodimer; disulfide-linked.

Its subcellular location is the secreted. It is found in the extracellular space. The protein resides in the extracellular matrix. The protein localises to the cytoplasm. Its function is as follows. Involved in the maintenance and repair of the intestinal mucosa. Promotes the mobility of epithelial cells in healing processes (motogen). The sequence is that of Trefoil factor 3 (TFF3) from Sus scrofa (Pig).